Here is a 226-residue protein sequence, read N- to C-terminus: Large ribosomal subunit protein uL1 (226 aa).

This sequence belongs to the universal ribosomal protein uL1 family. In terms of assembly, part of the 50S ribosomal subunit.

Binds directly to 23S rRNA. The L1 stalk is quite mobile in the ribosome, and is involved in E site tRNA release. Its function is as follows. Protein L1 is also a translational repressor protein, it controls the translation of the L11 operon by binding to its mRNA. The protein is Large ribosomal subunit protein uL1 of Treponema pallidum (strain Nichols).